The following is a 446-amino-acid chain: UDP-N-acetylmuramoylalanine--D-glutamate ligase (446 aa).

Position 115 to 121 (115 to 121 (GTNGKTT)) interacts with ATP.

Belongs to the MurCDEF family.

The protein localises to the cytoplasm. The catalysed reaction is UDP-N-acetyl-alpha-D-muramoyl-L-alanine + D-glutamate + ATP = UDP-N-acetyl-alpha-D-muramoyl-L-alanyl-D-glutamate + ADP + phosphate + H(+). The protein operates within cell wall biogenesis; peptidoglycan biosynthesis. Functionally, cell wall formation. Catalyzes the addition of glutamate to the nucleotide precursor UDP-N-acetylmuramoyl-L-alanine (UMA). The protein is UDP-N-acetylmuramoylalanine--D-glutamate ligase of Pelobacter propionicus (strain DSM 2379 / NBRC 103807 / OttBd1).